We begin with the raw amino-acid sequence, 126 residues long: MSWQQYVDEQLTGAGLSQGAILGANDGGVWAKSSGINITKPEGDGIAALFKNPAEVFAKGALIGGVKYMGIKGDPQSIYGKKGATGCVLVRTGQAIIVGIYDDKVQPGSAALIVEKLGDYLRDNGY.

It belongs to the profilin family. Occurs in many kinds of cells as a complex with monomeric actin in a 1:1 ratio.

Its subcellular location is the cytoplasm. It is found in the cytoskeleton. Functionally, binds to actin and affects the structure of the cytoskeleton. At high concentrations, profilin prevents the polymerization of actin, whereas it enhances it at low concentrations. By binding to PIP2, it inhibits the formation of IP3 and DG. In Dictyostelium discoideum (Social amoeba), this protein is Profilin-1 (proA).